We begin with the raw amino-acid sequence, 120 residues long: Nitrogen regulatory protein GlnK3 (120 aa).

ADP-binding positions include Thr40 and 48 to 50; that span reads GEQ. ATP is bound by residues Thr40 and 48 to 50; that span reads GEQ. Residues 48-52 and Lys69 contribute to the 2-oxoglutarate site; that span reads GEQKG. ADP contacts are provided by residues Val75 and 98 to 101; that span reads GDGR. ATP contacts are provided by residues Val75 and 98–101; that span reads GDGR. Gly98 is a binding site for 2-oxoglutarate.

The protein belongs to the P(II) protein family. Homotrimer. Interacts and forms a complex with Amt3.

The protein localises to the cytoplasm. Its activity is regulated as follows. Activity is influenced by intracellular pools of the effector molecules ATP, ADP and 2-oxoglutarate. It senses the cellular nitrogen status through 2-oxoglutarate, and the energy level of the cell by binding both ATP and ADP with different affinities. ATP and 2-oxoglutarate prohibit binding to Amt3. ADP promotes the complex formation. In terms of biological role, involved in the regulation of nitrogen metabolism. Regulates the activity of its targets by protein-protein interaction in response to the nitrogen status of the cell. Regulates the activity of the ammonia channel Amt3 via direct interaction. In Archaeoglobus fulgidus (strain ATCC 49558 / DSM 4304 / JCM 9628 / NBRC 100126 / VC-16), this protein is Nitrogen regulatory protein GlnK3.